The chain runs to 181 residues: Adenine phosphoribosyltransferase (181 aa).

It belongs to the purine/pyrimidine phosphoribosyltransferase family. In terms of assembly, homodimer.

Its subcellular location is the cytoplasm. It catalyses the reaction AMP + diphosphate = 5-phospho-alpha-D-ribose 1-diphosphate + adenine. Its pathway is purine metabolism; AMP biosynthesis via salvage pathway; AMP from adenine: step 1/1. Its function is as follows. Catalyzes a salvage reaction resulting in the formation of AMP, that is energically less costly than de novo synthesis. The protein is Adenine phosphoribosyltransferase of Rhodopseudomonas palustris (strain HaA2).